Reading from the N-terminus, the 247-residue chain is 3-deoxy-manno-octulosonate cytidylyltransferase (247 aa).

This sequence belongs to the KdsB family.

The protein resides in the cytoplasm. It catalyses the reaction 3-deoxy-alpha-D-manno-oct-2-ulosonate + CTP = CMP-3-deoxy-beta-D-manno-octulosonate + diphosphate. It participates in nucleotide-sugar biosynthesis; CMP-3-deoxy-D-manno-octulosonate biosynthesis; CMP-3-deoxy-D-manno-octulosonate from 3-deoxy-D-manno-octulosonate and CTP: step 1/1. The protein operates within bacterial outer membrane biogenesis; lipopolysaccharide biosynthesis. In terms of biological role, activates KDO (a required 8-carbon sugar) for incorporation into bacterial lipopolysaccharide in Gram-negative bacteria. In Methylobacterium radiotolerans (strain ATCC 27329 / DSM 1819 / JCM 2831 / NBRC 15690 / NCIMB 10815 / 0-1), this protein is 3-deoxy-manno-octulosonate cytidylyltransferase.